A 123-amino-acid polypeptide reads, in one-letter code: UPF0102 protein CLM_2733 (123 aa).

It belongs to the UPF0102 family.

This Clostridium botulinum (strain Kyoto / Type A2) protein is UPF0102 protein CLM_2733.